Here is a 174-residue protein sequence, read N- to C-terminus: Crossover junction endodeoxyribonuclease RuvC (174 aa).

Residues Asp8, Glu67, and Asp139 contribute to the active site. Residues Asp8, Glu67, and Asp139 each coordinate Mg(2+).

This sequence belongs to the RuvC family. Homodimer which binds Holliday junction (HJ) DNA. The HJ becomes 2-fold symmetrical on binding to RuvC with unstacked arms; it has a different conformation from HJ DNA in complex with RuvA. In the full resolvosome a probable DNA-RuvA(4)-RuvB(12)-RuvC(2) complex forms which resolves the HJ. Mg(2+) serves as cofactor.

It localises to the cytoplasm. The catalysed reaction is Endonucleolytic cleavage at a junction such as a reciprocal single-stranded crossover between two homologous DNA duplexes (Holliday junction).. Its function is as follows. The RuvA-RuvB-RuvC complex processes Holliday junction (HJ) DNA during genetic recombination and DNA repair. Endonuclease that resolves HJ intermediates. Cleaves cruciform DNA by making single-stranded nicks across the HJ at symmetrical positions within the homologous arms, yielding a 5'-phosphate and a 3'-hydroxyl group; requires a central core of homology in the junction. The consensus cleavage sequence is 5'-(A/T)TT(C/G)-3'. Cleavage occurs on the 3'-side of the TT dinucleotide at the point of strand exchange. HJ branch migration catalyzed by RuvA-RuvB allows RuvC to scan DNA until it finds its consensus sequence, where it cleaves and resolves the cruciform DNA. The sequence is that of Crossover junction endodeoxyribonuclease RuvC from Pseudomonas fluorescens (strain ATCC BAA-477 / NRRL B-23932 / Pf-5).